A 184-amino-acid polypeptide reads, in one-letter code: Myosin regulatory light chain 1 (184 aa).

Residues 1–29 (MFSSKENSLGAKRAPFSSNTTSSQRVAAQ) form a disordered region. Position 36 is a phosphoserine (serine 36). 2 consecutive EF-hand domains span residues 45–80 (SQIQELKEAFALLDKDGDGNIGREDVKTMLTSLNQD) and 114–149 (SPRNDLLEAFSTFDDTQSGKIPISTMRDALSSMGDR). Residues aspartate 58, aspartate 60, aspartate 62, asparagine 64, and aspartate 69 each coordinate Ca(2+).

In terms of assembly, binds to myosin II chains myo2 and myo3.

It localises to the cytoplasm. This chain is Myosin regulatory light chain 1 (rlc1), found in Schizosaccharomyces pombe (strain 972 / ATCC 24843) (Fission yeast).